The following is a 347-amino-acid chain: Lipoyl synthase (347 aa).

7 residues coordinate [4Fe-4S] cluster: C55, C60, C66, C81, C85, C88, and S292. One can recognise a Radical SAM core domain in the interval 67 to 281 (WEDREASFLI…SEAAYDMGFP (215 aa)).

This sequence belongs to the radical SAM superfamily. Lipoyl synthase family. [4Fe-4S] cluster is required as a cofactor.

The protein localises to the cytoplasm. It carries out the reaction [[Fe-S] cluster scaffold protein carrying a second [4Fe-4S](2+) cluster] + N(6)-octanoyl-L-lysyl-[protein] + 2 oxidized [2Fe-2S]-[ferredoxin] + 2 S-adenosyl-L-methionine + 4 H(+) = [[Fe-S] cluster scaffold protein] + N(6)-[(R)-dihydrolipoyl]-L-lysyl-[protein] + 4 Fe(3+) + 2 hydrogen sulfide + 2 5'-deoxyadenosine + 2 L-methionine + 2 reduced [2Fe-2S]-[ferredoxin]. Its pathway is protein modification; protein lipoylation via endogenous pathway; protein N(6)-(lipoyl)lysine from octanoyl-[acyl-carrier-protein]: step 2/2. Catalyzes the radical-mediated insertion of two sulfur atoms into the C-6 and C-8 positions of the octanoyl moiety bound to the lipoyl domains of lipoate-dependent enzymes, thereby converting the octanoylated domains into lipoylated derivatives. The protein is Lipoyl synthase of Corynebacterium urealyticum (strain ATCC 43042 / DSM 7109).